We begin with the raw amino-acid sequence, 151 residues long: FAD synthase (151 aa).

ATP is bound by residues 12–13 (TF), 17–20 (HPGH), Asp-97, and Tyr-125.

This sequence belongs to the archaeal FAD synthase family. As to quaternary structure, homodimer. A divalent metal cation is required as a cofactor.

It carries out the reaction FMN + ATP + H(+) = FAD + diphosphate. Its pathway is cofactor biosynthesis; FAD biosynthesis; FAD from FMN: step 1/1. Functionally, catalyzes the transfer of the AMP portion of ATP to flavin mononucleotide (FMN) to produce flavin adenine dinucleotide (FAD) coenzyme. The protein is FAD synthase of Methanocaldococcus sp. (strain FS406-22).